The following is a 256-amino-acid chain: Protein FixA (256 aa).

Belongs to the ETF beta-subunit/FixA family. Heterodimer of FixA and FixB.

The protein operates within amine and polyamine metabolism; carnitine metabolism. In terms of biological role, required for anaerobic carnitine reduction. May bring reductant to CaiA. The protein is Protein FixA of Salmonella paratyphi A (strain ATCC 9150 / SARB42).